Here is a 238-residue protein sequence, read N- to C-terminus: MLLIVGLGNPGAKYQGNRHNIGFMAVDAIHRRHSFSPWAKKFRAEISEGELGGQKVLLIKPQTFMNLSGESVGEAMRFYKLEPSDLVVIYDELDLPAAKARLKTGGGHGGHNGIKSIDAHCGREYRRLRLGIGHPGVKELVQNHVLGDFAKVDRDWLEPLFDALADNADMLVRGEDSQLMNKIALALGGKTEEPAPKPEKKTVAKSHIHQARNHNQPRMPESGPMAEMLKRMFGKKDD.

Residue Y14 coordinates tRNA. H19 (proton acceptor) is an active-site residue. Residues F64, N66, and N112 each coordinate tRNA. Over residues K190–T202 the composition is skewed to basic and acidic residues. The disordered stretch occupies residues K190–M225. The segment covering V203–R212 has biased composition (basic residues).

The protein belongs to the PTH family. As to quaternary structure, monomer.

The protein resides in the cytoplasm. The catalysed reaction is an N-acyl-L-alpha-aminoacyl-tRNA + H2O = an N-acyl-L-amino acid + a tRNA + H(+). In terms of biological role, hydrolyzes ribosome-free peptidyl-tRNAs (with 1 or more amino acids incorporated), which drop off the ribosome during protein synthesis, or as a result of ribosome stalling. Functionally, catalyzes the release of premature peptidyl moieties from peptidyl-tRNA molecules trapped in stalled 50S ribosomal subunits, and thus maintains levels of free tRNAs and 50S ribosomes. In Rhizobium rhizogenes (strain K84 / ATCC BAA-868) (Agrobacterium radiobacter), this protein is Peptidyl-tRNA hydrolase.